A 559-amino-acid chain; its full sequence is ATP synthase subunit beta-3, mitochondrial (559 aa).

Low complexity predominate over residues 1–28 (MASRRILSSLLRSSSSRSTSKSSLIGSR). Residues 1–39 (MASRRILSSLLRSSSSRSTSKSSLIGSRNPRLLSPGPAH) form a disordered region. A mitochondrion-targeting transit peptide spans 1–54 (MASRRILSSLLRSSSSRSTSKSSLIGSRNPRLLSPGPAHGAAPCGTLLGRVAEY). S62 is subject to Phosphoserine. 234-241 (GGAGVGKT) contributes to the ATP binding site.

The protein belongs to the ATPase alpha/beta chains family. F-type ATPases have 2 components, CF(1) - the catalytic core - and CF(0) - the membrane proton channel. CF(1) has five subunits: alpha(3), beta(3), gamma(1), delta(1), epsilon(1). CF(0) has three main subunits: a, b and c.

The protein resides in the mitochondrion. It is found in the mitochondrion inner membrane. It carries out the reaction ATP + H2O + 4 H(+)(in) = ADP + phosphate + 5 H(+)(out). In terms of biological role, mitochondrial membrane ATP synthase (F(1)F(0) ATP synthase or Complex V) produces ATP from ADP in the presence of a proton gradient across the membrane which is generated by electron transport complexes of the respiratory chain. F-type ATPases consist of two structural domains, F(1) - containing the extramembraneous catalytic core, and F(0) - containing the membrane proton channel, linked together by a central stalk and a peripheral stalk. During catalysis, ATP synthesis in the catalytic domain of F(1) is coupled via a rotary mechanism of the central stalk subunits to proton translocation. Subunits alpha and beta form the catalytic core in F(1). Rotation of the central stalk against the surrounding alpha(3)beta(3) subunits leads to hydrolysis of ATP in three separate catalytic sites on the beta subunits. This is ATP synthase subunit beta-3, mitochondrial from Arabidopsis thaliana (Mouse-ear cress).